A 164-amino-acid polypeptide reads, in one-letter code: UPF0114 protein YqhA (164 aa).

A run of 3 helical transmembrane segments spans residues 15 to 35, 53 to 73, and 136 to 156; these read LLAPVYFGLSLALIALALKFF, LILVLLSLVDMTLVGGLLVMV, and LMWYVIIHLTFVLSAFVMGYL.

Belongs to the UPF0114 family.

The protein resides in the cell membrane. The polypeptide is UPF0114 protein YqhA (Escherichia coli O6:H1 (strain CFT073 / ATCC 700928 / UPEC)).